The chain runs to 216 residues: MKWSEVFHDITTRHDFQAMHDFLEKEYTTQTVYPDKQNIYQAFDLTPFEDIKVVILGQDPYHGPNQAHGLAFSVQPHAKFPPSLRNMYQELENDIGCHRTSPHLQDWAREGVLLLNTVLTVRQGEAHSHRNIGWETFTDEIIQAVSNYREHVVFILWGRPAQQKERFIDTSKHLIIKSPHPSPLSAFRGFFGSKPYSTTNNYLKSKGKTPVQWCES.

The Proton acceptor role is filled by aspartate 59.

It belongs to the uracil-DNA glycosylase (UDG) superfamily. UNG family.

The protein resides in the cytoplasm. It catalyses the reaction Hydrolyzes single-stranded DNA or mismatched double-stranded DNA and polynucleotides, releasing free uracil.. Its function is as follows. Excises uracil residues from the DNA which can arise as a result of misincorporation of dUMP residues by DNA polymerase or due to deamination of cytosine. The polypeptide is Uracil-DNA glycosylase (Staphylococcus epidermidis (strain ATCC 12228 / FDA PCI 1200)).